We begin with the raw amino-acid sequence, 126 residues long: MSIIGIGTDIIEIFRIKNIVYNFKDKLAERILSVQELEKYKVNKNPIKFLAKRFAVKEAASKALGTGISYGIKFNQIELYNNNLGKPKLRFLKYALQKSEEMKCKSIFVSISDEKLYACALVILEK.

Positions 9 and 58 each coordinate Mg(2+).

It belongs to the P-Pant transferase superfamily. AcpS family. Mg(2+) serves as cofactor.

It localises to the cytoplasm. The enzyme catalyses apo-[ACP] + CoA = holo-[ACP] + adenosine 3',5'-bisphosphate + H(+). Its function is as follows. Transfers the 4'-phosphopantetheine moiety from coenzyme A to a Ser of acyl-carrier-protein. This is Holo-[acyl-carrier-protein] synthase from Buchnera aphidicola subsp. Schizaphis graminum (strain Sg).